Reading from the N-terminus, the 121-residue chain is Ribulose bisphosphate carboxylase small subunit (121 aa).

It belongs to the RuBisCO small chain family. Heterohexadecamer of 8 large and 8 small subunits.

Functionally, ruBisCO catalyzes two reactions: the carboxylation of D-ribulose 1,5-bisphosphate, the primary event in carbon dioxide fixation, as well as the oxidative fragmentation of the pentose substrate. Both reactions occur simultaneously and in competition at the same active site. Although the small subunit is not catalytic it is essential for maximal activity. The protein is Ribulose bisphosphate carboxylase small subunit of Alvinoconcha hessleri symbiotic bacterium.